We begin with the raw amino-acid sequence, 482 residues long: MYGAGVVTRMNEAERFHMTDPGSTKILIYAFNYADRMLEEVPYLRYSAERSLCFLGDLRDPGTRLVVITSEAVDPATLDYHLRDVFRFDEPALADVRRRLTLLTPASRAARPLDSLVLEDEALVETLRRAVAERPAGTIVDFSASPATDELGRRTGATPEEGDHAFVARWGSKSGGKEICLRAGVAVPGGTSEVLRSEAEVVEAIHRLSCGTAAARRAMVKLDAITWAASIGNVLIDRDKLRHTGDLVGSAEVIRLPAEEFRRELAEQGAIVEEFLEEITDSPSGLGHIERDGTVRVVACHDQVLSGGQYWGCRFPADERWRPEITDAVRRTGEVLSGLGHRGAFGVDFVVAGERGLLAVEINLRKVGPSHVVRYAEALVGARVGADGMLRGADGRPVYYTHGRLLEPETLGKLNPRTAVERLRAEGLLYRHDTGEGVALHVLGALNACGFVELTALARSPEAADGYSRAAQALLTGPYPSA.

The catalysed reaction is L-propargylglycine + L-glutamate + ATP = L-gamma-glutamyl-L-propargylglycine + ADP + phosphate + H(+). The protein operates within amino-acid metabolism. It participates in antibiotic biosynthesis. Functionally, involved in the biosynthesis of terminal alkyne-containing amino acids such as L-beta-ethynylserine, that are produced as antibiotics by S.cattleya. Catalyzes the ATP-dependent ligation of L-propargylglycine to L-glutamate to form the dipeptide L-gamma-glutamyl-L-propargylglycine. Is selective for L-propargylglycine over norvaline, allylglycine and the standard proteinogenic amino acids, except L-cysteine which can be used as a substrate to a lesser extent. In Streptantibioticus cattleyicolor (strain ATCC 35852 / DSM 46488 / JCM 4925 / NBRC 14057 / NRRL 8057) (Streptomyces cattleya), this protein is L-propargylglycine--L-glutamate ligase.